The primary structure comprises 273 residues: MDPSKGFEYVAGDYYQTSGVAPPTSNGAGSNVSPYFPYHAYPTSSTNGATGGSMYGTPQQTSAYAMYPPGPGSSPEEAFPEHTTTKIVEGCEAKYNVKGKKMRKPRTIYNSSQLQMLQKKFQKTQYLALPDRAALAHELGLSQTQVKIWFQNRRSKQKKQKGGSSDHASDEEDDDTEESKPESPPMGESVMIQESSEPRTLVSSSIKTEMKEEYPPMTLNEQYASPYLYGSDFSTILPPSQGFPNNALYNTAGAYPSIDYTNGVYQNTLYKYV.

2 disordered regions span residues 47-79 and 153-204; these read NGAT…EEAF and RRSK…LVSS. Residues 102-161 constitute a DNA-binding region (homeobox); the sequence is MRKPRTIYNSSQLQMLQKKFQKTQYLALPDRAALAHELGLSQTQVKIWFQNRRSKQKKQK.

This sequence belongs to the distal-less homeobox family. In terms of tissue distribution, predominantly expressed in the head hypdodermis, neuronal support cells and CAN neurons.

The protein resides in the nucleus. Its function is as follows. Probable transcription factor. Binds to the sequence motif 5'-ATAAT-3' in regulatory elements. Required for development of the anterior hypodermis during embryonic morphogenesis for cell adhesion; also affects embryonic and larval viability. Modulates and maintains dopaminergic neuron differentiation. May activate dopamine pathway genes in concert with ETS domain-containing protein ast-1, and homeobox proteins ceh-40 and ceh-20. This Caenorhabditis elegans protein is Homeobox protein ceh-43 (ceh-43).